The chain runs to 380 residues: cAMP-dependent protein kinase type I-alpha regulatory subunit (380 aa).

At M1 the chain carries N-acetylmethionine. At A2 the chain carries N-acetylalanine; in cAMP-dependent protein kinase type I-alpha regulatory subunit, N-terminally processed. Positions 2–135 are dimerization and phosphorylation; that stretch reads ASGTTASEEE…ALAKAIEKNV (134 aa). S3, S76, and S82 each carry phosphoserine. The segment at 64 to 96 is disordered; that stretch reads IQNLQKAGSRADSREDEISPPPPNPVVKGRRRR. Positions 95-99 match the Pseudophosphorylation motif motif; sequence RRGAI. S100 bears the Phosphoserine mark. Residues 136–253, E201, R210, 254–380, E325, and R334 contribute to the 3',5'-cyclic AMP site; these read LFSH…SKVS and ILES…SLSV. S257 carries the phosphoserine modification.

The protein belongs to the cAMP-dependent kinase regulatory chain family. The inactive holoenzyme is composed of two regulatory chains and two catalytic chains. Activation by cAMP releases the two active catalytic monomers and the regulatory dimer. Interacts with PRKACA and PRKACB. PRKAR1A also interacts with RFC2; the complex may be involved in cell survival. Interacts with AKAP4. Interacts with RARA; the interaction occurs in the presence of cAMP or FSH and regulates RARA transcriptional activity. Interacts with the phosphorylated form of PJA2. Interacts with CBFA2T3. Interacts with PRKX; regulates this cAMP-dependent protein kinase. Interacts with smAKAP; this interaction may target PRKAR1A to the plasma membrane. Interacts with AICDA. Post-translationally, the pseudophosphorylation site binds to the substrate-binding region of the catalytic chain, resulting in the inhibition of its activity. The physiological significance of the in vitro phosphorylation of a proximal serine is unclear. Four types of regulatory chains are found: I-alpha, I-beta, II-alpha, and II-beta. Their expression varies among tissues and is in some cases constitutive and in others inducible.

The protein localises to the cell membrane. Regulatory subunit of the cAMP-dependent protein kinases involved in cAMP signaling in cells. This is cAMP-dependent protein kinase type I-alpha regulatory subunit (PRKAR1A) from Bos taurus (Bovine).